A 291-amino-acid polypeptide reads, in one-letter code: Ribonuclease Z (291 aa).

7 residues coordinate Zn(2+): histidine 61, histidine 63, aspartate 65, histidine 66, histidine 133, aspartate 201, and histidine 257. Catalysis depends on aspartate 65, which acts as the Proton acceptor.

The protein belongs to the RNase Z family. As to quaternary structure, homodimer. Requires Zn(2+) as cofactor.

It carries out the reaction Endonucleolytic cleavage of RNA, removing extra 3' nucleotides from tRNA precursor, generating 3' termini of tRNAs. A 3'-hydroxy group is left at the tRNA terminus and a 5'-phosphoryl group is left at the trailer molecule.. Its function is as follows. Zinc phosphodiesterase, which displays some tRNA 3'-processing endonuclease activity. Probably involved in tRNA maturation, by removing a 3'-trailer from precursor tRNA. This chain is Ribonuclease Z, found in Saccharolobus islandicus (strain M.16.27) (Sulfolobus islandicus).